Consider the following 266-residue polypeptide: Proteasome subunit beta type-7 (266 aa).

Residues 1–33 (MNHDPFSWGRPADSTYGAYNTQIANAGASPMVN) constitute a propeptide that is removed on maturation.

This sequence belongs to the peptidase T1B family. In terms of assembly, the 26S proteasome consists of a 20S proteasome core and two 19S regulatory subunits. The 20S proteasome core is composed of 28 subunits that are arranged in four stacked rings, resulting in a barrel-shaped structure. The two end rings are each formed by seven alpha subunits, and the two central rings are each formed by seven beta subunits. The catalytic chamber with the active sites is on the inside of the barrel. Interacts with CIC1.

Its subcellular location is the cytoplasm. The protein localises to the nucleus. Functionally, non-catalytic component of the proteasome which degrades poly-ubiquitinated proteins in the cytoplasm and in the nucleus. It is essential for the regulated turnover of proteins and for the removal of misfolded proteins. The proteasome is a multicatalytic proteinase complex that is characterized by its ability to cleave peptides with Arg, Phe, Tyr, Leu, and Glu adjacent to the leaving group at neutral or slightly basic pH. It has an ATP-dependent proteolytic activity. PRE3 and PRE4 are necessary for the peptidyl-glutamyl-peptide-hydrolyzing activity. The sequence is that of Proteasome subunit beta type-7 (PRE4) from Saccharomyces cerevisiae (strain ATCC 204508 / S288c) (Baker's yeast).